A 3075-amino-acid polypeptide reads, in one-letter code: Lovastatin nonaketide synthase mokA (3075 aa).

The 440-residue stretch at 49–488 (NEPIVVVGSG…GTNAHAIIEE (440 aa)) folds into the Ketosynthase family 3 (KS3) domain. Active-site for beta-ketoacyl synthase activity residues include Cys-222, His-361, and His-408. The tract at residues 603–945 (VFTGQGAQWP…AYLWEQFGIP (343 aa)) is acyl and malonyl transferase. The active-site For malonyltransferase activity is Ser-697. Residues 997 to 1133 (HLLLGKLSEY…GQLVVTLDEG (137 aa)) form an N-terminal hotdog fold region. Positions 997–1311 (HLLLGKLSEY…FKPFSPPTAS (315 aa)) constitute a PKS/mFAS DH domain. The active-site Proton acceptor; for dehydratase activity is His-1029. The dehydratase-like stretch occupies residues 1029-1041 (HALQGQVVFPAAG). The segment at 1156–1311 (MNRVNINSFY…FKPFSPPTAS (156 aa)) is C-terminal hotdog fold. The Proton donor; for dehydratase activity role is filled by Asp-1218. A methyltransferase region spans residues 1556-1594 (YDLIIASNVLHATPDLEKTMAHARSLLKPGGQMVILEIT). The beta-ketoacyl reductase stretch occupies residues 2176 to 2470 (ALPARIRPID…FKIPERRGKA (295 aa)). Positions 2492–2571 (DQVRQIVIDG…DLADDAAARL (80 aa)) constitute a Carrier domain. Residue Ser-2531 is modified to O-(pantetheine 4'-phosphoryl)serine. Positions 2582–2624 (SEGGAETSDNDTSGPEGTDLSASTTITEPSSADEEDEKQEDDN) are disordered. The segment covering 2591 to 2611 (NDTSGPEGTDLSASTTITEPS) has biased composition (polar residues). Acidic residues predominate over residues 2612–2624 (SADEEDEKQEDDN). The segment at 2633 to 2989 (PLSLGQEYAW…AETAEPAPLF (357 aa)) is peptide synthetase elongation.

It depends on pantetheine 4'-phosphate as a cofactor.

The enzyme catalyses holo-[lovastatin nonaketide synthase] + 9 malonyl-CoA + S-adenosyl-L-methionine + 11 NADPH + 19 H(+) = dihydromonacolin L-[lovastatin nonaketide synthase] + S-adenosyl-L-homocysteine + 9 CO2 + 11 NADP(+) + 9 CoA + 6 H2O. The protein operates within polyketide biosynthesis; lovastatin biosynthesis. Functionally, nonaketide synthase; part of the gene cluster that mediates the biosynthesis of monakolin K, also known as lovastatin, and which acts as a potent competitive inhibitor of HMG-CoA reductase. Monakolin K biosynthesis is performed in two stages. The first stage is catalyzed by the nonaketide synthase mokA, which belongs to type I polyketide synthases and catalyzes the iterative nine-step formation of the polyketide. This PKS stage is completed by the action of dehydrogenase mokE, which catalyzes the NADPH-dependent reduction of the unsaturated tetra-, penta- and heptaketide intermediates that arise during the mokA-mediated biosynthesis of the nonaketide chain and leads to dihydromonacolin L. Covalently bound dihydromonacolin L is released from mokA by the mokD esterase. Conversion of dihydromonacolin L into monacolin L and then monacolin J is subsequently performed with the participation of molecular oxygen and P450 monoogygenase mokC. Finally, mokF performs the conversion of monacoline J to monacoline K through the addition of the side-chain diketide moiety (2R)-2-methylbutanoate produced by the diketide synthase mokB. This Monascus pilosus (Red mold) protein is Lovastatin nonaketide synthase mokA.